The sequence spans 296 residues: Carboxylesterase YbfK (296 aa).

Catalysis depends on charge relay system residues Ser-129, Glu-244, and His-273.

The protein belongs to the AB hydrolase superfamily.

The protein resides in the cytoplasm. It carries out the reaction a carboxylic ester + H2O = an alcohol + a carboxylate + H(+). In terms of biological role, shows carboxylesterase activity in vitro. The sequence is that of Carboxylesterase YbfK (ybfK) from Bacillus subtilis (strain 168).